We begin with the raw amino-acid sequence, 168 residues long: Small ribosomal subunit protein uS9 (168 aa).

Residues 1–15 show a composition bias toward acidic residues; sequence MAQNEETTEAVEAEE. Residues 1-34 are disordered; the sequence is MAQNEETTEAVEAEETLTSYTSESGAAEAAAPKK.

It belongs to the universal ribosomal protein uS9 family.

The sequence is that of Small ribosomal subunit protein uS9 from Arthrobacter sp. (strain FB24).